A 522-amino-acid polypeptide reads, in one-letter code: DNA damage-binding protein CMR1 (522 aa).

The interval 38–100 is disordered; it reads AGVLEKSRAP…DNQLLKMGSP (63 aa). Over residues 54-63 the composition is skewed to polar residues; sequence TTNTRATKSA. Ser64 is modified (phosphoserine). A Phosphothreonine modification is found at Thr69. The segment covering 75 to 84 has biased composition (basic and acidic residues); sequence LRGESADDVK. WD repeat units follow at residues 183 to 224, 239 to 281, 287 to 327, 331 to 371, 388 to 427, 442 to 481, and 482 to 521; these read ITYE…LADS, LFTK…EVLT, DDSL…SEYN, LADK…KKPE, DSRL…HLSA, GRWT…LAHL, and PTAT…IKQE. Phosphoserine is present on Ser224.

It belongs to the WD repeat DDB2/WDR76 family.

It is found in the cytoplasm. Its subcellular location is the nucleus. DNA-binding protein that binds to both single- and double-stranded DNA. Binds preferentially to UV-damaged DNA in vitro. May be involved in DNA-metabolic processes. This chain is DNA damage-binding protein CMR1, found in Saccharomyces cerevisiae (strain ATCC 204508 / S288c) (Baker's yeast).